A 320-amino-acid chain; its full sequence is Transaldolase (320 aa).

Lys-135 serves as the catalytic Schiff-base intermediate with substrate.

This sequence belongs to the transaldolase family. Type 1 subfamily. In terms of assembly, homodimer.

It is found in the cytoplasm. The enzyme catalyses D-sedoheptulose 7-phosphate + D-glyceraldehyde 3-phosphate = D-erythrose 4-phosphate + beta-D-fructose 6-phosphate. It functions in the pathway carbohydrate degradation; pentose phosphate pathway; D-glyceraldehyde 3-phosphate and beta-D-fructose 6-phosphate from D-ribose 5-phosphate and D-xylulose 5-phosphate (non-oxidative stage): step 2/3. Its function is as follows. Transaldolase is important for the balance of metabolites in the pentose-phosphate pathway. This is Transaldolase from Colwellia psychrerythraea (strain 34H / ATCC BAA-681) (Vibrio psychroerythus).